The chain runs to 360 residues: Uroporphyrinogen decarboxylase (360 aa).

Substrate contacts are provided by residues 31–35 (RQAGR), aspartate 81, tyrosine 157, threonine 212, and histidine 333.

Belongs to the uroporphyrinogen decarboxylase family. In terms of assembly, homodimer.

The protein resides in the cytoplasm. It catalyses the reaction uroporphyrinogen III + 4 H(+) = coproporphyrinogen III + 4 CO2. It participates in porphyrin-containing compound metabolism; protoporphyrin-IX biosynthesis; coproporphyrinogen-III from 5-aminolevulinate: step 4/4. Its function is as follows. Catalyzes the decarboxylation of four acetate groups of uroporphyrinogen-III to yield coproporphyrinogen-III. The chain is Uroporphyrinogen decarboxylase from Janthinobacterium sp. (strain Marseille) (Minibacterium massiliensis).